The chain runs to 449 residues: UDP-N-acetylmuramoylalanine--D-glutamate ligase (449 aa).

ATP is bound at residue 119–125 (GSNGKTT).

Belongs to the MurCDEF family.

It localises to the cytoplasm. The enzyme catalyses UDP-N-acetyl-alpha-D-muramoyl-L-alanine + D-glutamate + ATP = UDP-N-acetyl-alpha-D-muramoyl-L-alanyl-D-glutamate + ADP + phosphate + H(+). Its pathway is cell wall biogenesis; peptidoglycan biosynthesis. Functionally, cell wall formation. Catalyzes the addition of glutamate to the nucleotide precursor UDP-N-acetylmuramoyl-L-alanine (UMA). This Streptococcus suis (strain 98HAH33) protein is UDP-N-acetylmuramoylalanine--D-glutamate ligase.